Here is a 111-residue protein sequence, read N- to C-terminus: MNTLKKNGEFQNIYNLGNKYFGNYSLIFFNKNKLEYSRFGFIASKKVGKAFCRNRIKRLFREYIRLNINKINDNYDIIIVAKKKFGENIEDLKYKDIEKDLNRVFKNSKII.

It belongs to the RnpA family. In terms of assembly, consists of a catalytic RNA component (M1 or rnpB) and a protein subunit.

The enzyme catalyses Endonucleolytic cleavage of RNA, removing 5'-extranucleotides from tRNA precursor.. Its function is as follows. RNaseP catalyzes the removal of the 5'-leader sequence from pre-tRNA to produce the mature 5'-terminus. It can also cleave other RNA substrates such as 4.5S RNA. The protein component plays an auxiliary but essential role in vivo by binding to the 5'-leader sequence and broadening the substrate specificity of the ribozyme. This Fusobacterium nucleatum subsp. nucleatum (strain ATCC 25586 / DSM 15643 / BCRC 10681 / CIP 101130 / JCM 8532 / KCTC 2640 / LMG 13131 / VPI 4355) protein is Ribonuclease P protein component.